Consider the following 248-residue polypeptide: Uridylate kinase (248 aa).

Residue 11 to 14 (KISG) coordinates ATP. Gly-53 contacts UMP. Positions 54 and 58 each coordinate ATP. UMP-binding positions include Asp-74 and 135–142 (AGSPYLTT). 3 residues coordinate ATP: Thr-162, Tyr-169, and Asp-172.

The protein belongs to the UMP kinase family. As to quaternary structure, homohexamer.

It is found in the cytoplasm. It carries out the reaction UMP + ATP = UDP + ADP. The protein operates within pyrimidine metabolism; CTP biosynthesis via de novo pathway; UDP from UMP (UMPK route): step 1/1. Inhibited by UTP. Catalyzes the reversible phosphorylation of UMP to UDP. The protein is Uridylate kinase of Chlamydia pneumoniae (Chlamydophila pneumoniae).